A 305-amino-acid polypeptide reads, in one-letter code: MGLAGRDLLTLADLSSAEVLEILELAATLKSGQTTVHCPKTLGLIFSKSSTRTRVSFSAAIMQMGGQVLDLNPNVTQVGRGEPIADTARVLSRYLDALAIRTFAQQDLEEYAHYADIPVINALTDDYHPCQILADLQTIQENFGQWQDLTLTYLGDGNNVAHSLLLGCAQVGMNVRIACPPDYQPQERIVAKAQQIAGDRAKVEILHDPIAASQGAHVLYTDVWASMGQEEEAQARVKAFTPYQLNQALLEKADPAAIVLHCLPAHREEEITAEVLEGSQSRVWDQAENRLHAQKAVLALLLGAI.

Residues 50–53 (STRT), glutamine 77, arginine 101, and 128–131 (HPCQ) each bind carbamoyl phosphate. L-ornithine-binding positions include asparagine 159, aspartate 222, and 226–227 (SM). Residues 262 to 263 (CL) and arginine 290 contribute to the carbamoyl phosphate site.

This sequence belongs to the aspartate/ornithine carbamoyltransferase superfamily. OTCase family.

It localises to the cytoplasm. The enzyme catalyses carbamoyl phosphate + L-ornithine = L-citrulline + phosphate + H(+). It functions in the pathway amino-acid biosynthesis; L-arginine biosynthesis; L-arginine from L-ornithine and carbamoyl phosphate: step 1/3. Its function is as follows. Reversibly catalyzes the transfer of the carbamoyl group from carbamoyl phosphate (CP) to the N(epsilon) atom of ornithine (ORN) to produce L-citrulline. The protein is Ornithine carbamoyltransferase of Synechococcus elongatus (strain ATCC 33912 / PCC 7942 / FACHB-805) (Anacystis nidulans R2).